Reading from the N-terminus, the 172-residue chain is uncharacterized protein (172 aa).

An N-terminal signal peptide occupies residues 1 to 22 (MKLFQLLLLVLTISSFIISNNG). The Extracellular portion of the chain corresponds to 23–140 (LVESHQGRMH…FSYENSSNET (118 aa)). Residues 27-69 (HQGRMHRGSGERHHRAGGNQQQPQPPSEQQVESSYNSNDDGSS) are disordered. Residues 29–42 (GRMHRGSGERHHRA) are compositionally biased toward basic residues. The segment covering 53–69 (SEQQVESSYNSNDDGSS) has biased composition (low complexity). 2 N-linked (GlcNAc...) asparagine glycosylation sites follow: N135 and N138. The chain crosses the membrane as a helical span at residues 141 to 161 (IVIYINPVTLVFTLVLLLTFI). The Cytoplasmic portion of the chain corresponds to 162–172 (VLTITQSLRKY).

It is found in the membrane. This is an uncharacterized protein from Dictyostelium discoideum (Social amoeba).